The sequence spans 1836 residues: Druantia protein DruE (1836 aa).

The 298-residue stretch at 108-405 (SFLGEDASDL…FAQDLTGLSP (298 aa)) folds into the Helicase ATP-binding domain. 121–128 (TGTGSGKT) serves as a coordination point for ATP. The DEAH box motif lies at 347-350 (DEAH). The Helicase C-terminal domain occupies 1014 to 1199 (DCTALMPFAL…EVKVNNPKIA (186 aa)).

It is found in the cytoplasm. Its function is as follows. Component of antiviral defense system Druantia type I, composed of DruA, DruB, DruC, DruD and DruE. Expression of Druantia in E.coli (strain MG1655) confers resistance to phage lambda, SECphi18, SECphi27 and T4. This protein is probably a helicase. This chain is Druantia protein DruE, found in Escherichia coli (strain UMEA 4076-1).